The primary structure comprises 357 residues: 3-isopropylmalate dehydrogenase (357 aa).

Glycine 75–glutamate 88 contributes to the NAD(+) binding site. 4 residues coordinate substrate: arginine 96, arginine 106, arginine 135, and aspartate 224. Residues aspartate 224, aspartate 248, and aspartate 252 each coordinate Mg(2+). Position 282-294 (glycine 282–asparagine 294) interacts with NAD(+).

The protein belongs to the isocitrate and isopropylmalate dehydrogenases family. LeuB type 1 subfamily. Homodimer. Requires Mg(2+) as cofactor. Mn(2+) is required as a cofactor.

It is found in the cytoplasm. It carries out the reaction (2R,3S)-3-isopropylmalate + NAD(+) = 4-methyl-2-oxopentanoate + CO2 + NADH. The protein operates within amino-acid biosynthesis; L-leucine biosynthesis; L-leucine from 3-methyl-2-oxobutanoate: step 3/4. In terms of biological role, catalyzes the oxidation of 3-carboxy-2-hydroxy-4-methylpentanoate (3-isopropylmalate) to 3-carboxy-4-methyl-2-oxopentanoate. The product decarboxylates to 4-methyl-2 oxopentanoate. The protein is 3-isopropylmalate dehydrogenase of Desulfotalea psychrophila (strain LSv54 / DSM 12343).